The chain runs to 435 residues: tRNA modification GTPase MnmE (435 aa).

Arginine 24, glutamate 85, and arginine 124 together coordinate (6S)-5-formyl-5,6,7,8-tetrahydrofolate. Residues 220-361 enclose the TrmE-type G domain; it reads GLVFTIVGAP…LRTALAERAR (142 aa). Asparagine 230 is a binding site for K(+). GTP is bound by residues 230–235, 249–255, and 274–277; these read NVGKSS, SAIAGTT, and DTAG. Serine 234 contacts Mg(2+). Serine 249, isoleucine 251, and threonine 254 together coordinate K(+). Residue threonine 255 participates in Mg(2+) binding. Lysine 435 contacts (6S)-5-formyl-5,6,7,8-tetrahydrofolate.

It belongs to the TRAFAC class TrmE-Era-EngA-EngB-Septin-like GTPase superfamily. TrmE GTPase family. In terms of assembly, homodimer. Heterotetramer of two MnmE and two MnmG subunits. Requires K(+) as cofactor.

It is found in the cytoplasm. Functionally, exhibits a very high intrinsic GTPase hydrolysis rate. Involved in the addition of a carboxymethylaminomethyl (cmnm) group at the wobble position (U34) of certain tRNAs, forming tRNA-cmnm(5)s(2)U34. This Gluconacetobacter diazotrophicus (strain ATCC 49037 / DSM 5601 / CCUG 37298 / CIP 103539 / LMG 7603 / PAl5) protein is tRNA modification GTPase MnmE.